Consider the following 268-residue polypeptide: MKILVSNDDGIFAEGIRSLANGLAAVGHEVFVVCPDKERSATGHGLTLHQPIRAEIVKSIFDDRITAWACSGTPADCVKLALFSLLETQPDLVLAGINHGPNLGTDIFYSGTVSAAMEGIVENIPSIAFSLGSYTSREFEVAVNFAQSLVQKIESQPLDNLMLLNVNIPAVKETEIAGVKITRQGVCRYIDIFKKRVDPRGKTYYWLAGELLEETEETKDQAIPDKYNTDVEAMREKYITITPLQYNLTYGRQLTYLQKWKIDNFSYN.

Asp-8, Asp-9, Ser-40, and Asn-98 together coordinate a divalent metal cation.

It belongs to the SurE nucleotidase family. It depends on a divalent metal cation as a cofactor.

The protein resides in the cytoplasm. It catalyses the reaction a ribonucleoside 5'-phosphate + H2O = a ribonucleoside + phosphate. Functionally, nucleotidase that shows phosphatase activity on nucleoside 5'-monophosphates. This chain is 5'-nucleotidase SurE, found in Trichodesmium erythraeum (strain IMS101).